Here is a 256-residue protein sequence, read N- to C-terminus: MVYGELIYHPVVTKLLKFLDSSASREKLLRLLQYLCRFLTFYTFKRNFNIETIQLIKKIQSSIGISRKPLRFLKNLPHLKNLNKIYSNELLDSTLKIGDLIKNFGYALYFQFDTLQWLKLLGLLTSKNSGSLYFKIDKLAANFWLIGLTGSIITDLRNLKISYDSNKALLNEINSQNNNSNNDTLDEKLIEQNNDLILKNNEKINLNKRDLFKNILDSLIALKGSQLIDLNDGVLGFAGIITSIIGIEDIWNATKA.

The protein belongs to the peroxin-11 family.

Its subcellular location is the peroxisome membrane. In terms of biological role, involved in peroxisomal proliferation. Could participate in peroxisomal elongation or fission. May be involved in parceling of peroxisomes into regular quanta. The sequence is that of Peroxisomal membrane protein PMP30B (PEX11B) from Candida boidinii (Yeast).